Here is a 329-residue protein sequence, read N- to C-terminus: Putative 1-aminocyclopropane-1-carboxylate deaminase (329 aa).

Position 54 is an N6-(pyridoxal phosphate)lysine (lysine 54).

It belongs to the ACC deaminase/D-cysteine desulfhydrase family. The cofactor is pyridoxal 5'-phosphate.

It carries out the reaction 1-aminocyclopropane-1-carboxylate + H2O = 2-oxobutanoate + NH4(+). The sequence is that of Putative 1-aminocyclopropane-1-carboxylate deaminase from Pyrococcus furiosus (strain ATCC 43587 / DSM 3638 / JCM 8422 / Vc1).